Consider the following 499-residue polypeptide: NADH-quinone oxidoreductase subunit 14 (499 aa).

14 consecutive transmembrane segments (helical) span residues 9 to 29 (ILPEVVLAGYALAALMAGAYL), 37 to 57 (TLLWVTVAAFLVVAAMVGLGN), 76 to 96 (FAKVVTLVAAAGVLAMSADYM), 104 to 124 (FEFPIIVALAVLGMMFMVSAG), 126 to 146 (LLTLYMGLELQSLALYVVAAM), 161 to 181 (FVLGSLSSGLLLYGASLVYGF), 196 to 216 (AGHLSLGVLFGLVFMLVGLSF), 235 to 255 (PTPVTAFFATAPKVAAMALIA), 269 to 289 (WSQIVAALAVMSMFLGSIAGI), 301 to 321 (SSIAHMGFALVGLAAGTAIGV), 324 to 344 (MLLYMTIYAVMNIGTFAFILS), 369 to 389 (ALAMLVLMFSLAGVPPTLGFF), 402 to 422 (GMGWLAVLGVIASVIGAFYYL), and 446 to 466 (YLALMVPALAMLVGAISMFGV).

The protein belongs to the complex I subunit 2 family. NDH-1 is composed of at least 14 different subunits, Nqo1 to Nqo14. The complex has a L-shaped structure, with the hydrophobic arm (subunits Nqo7, Nqo8, Nqo10 to Nqo14) embedded in the inner membrane and the hydrophilic peripheral arm (subunits Nqo1 to Nqo6, Nqo9) protruding into the bacterial cytoplasm. The hydrophilic domain contains all the redox centers.

The protein localises to the cell inner membrane. The enzyme catalyses a quinone + NADH + 5 H(+)(in) = a quinol + NAD(+) + 4 H(+)(out). Its function is as follows. NDH-1 shuttles electrons from NADH, via FMN and iron-sulfur (Fe-S) centers, to quinones in the respiratory chain. The immediate electron acceptor for the enzyme in this species is believed to be ubiquinone. Couples the redox reaction to proton translocation (for every two electrons transferred, four hydrogen ions are translocated across the cytoplasmic membrane), and thus conserves the redox energy in a proton gradient. In Paracoccus denitrificans, this protein is NADH-quinone oxidoreductase subunit 14.